Here is a 257-residue protein sequence, read N- to C-terminus: 5'-nucleotidase SurE (257 aa).

Asp-9, Asp-10, Ser-40, and Asn-93 together coordinate a divalent metal cation.

The protein belongs to the SurE nucleotidase family. Requires a divalent metal cation as cofactor.

It is found in the cytoplasm. It catalyses the reaction a ribonucleoside 5'-phosphate + H2O = a ribonucleoside + phosphate. In terms of biological role, nucleotidase that shows phosphatase activity on nucleoside 5'-monophosphates. This is 5'-nucleotidase SurE from Campylobacter hominis (strain ATCC BAA-381 / DSM 21671 / CCUG 45161 / LMG 19568 / NCTC 13146 / CH001A).